The chain runs to 129 residues: RxLR effector protein SFI6 (129 aa).

The first 16 residues, 1-16 (MTLVVLATGLLASGTA), serve as a signal peptide directing secretion. Residues 42-64 (RFLRSHQITDDKVEINEHGEEER) carry the RxLR-dEER motif.

It belongs to the RxLR effector family.

The protein localises to the secreted. It localises to the host cytoplasm. The protein resides in the host cell membrane. In terms of biological role, effector that suppresses flg22-induced post-translational MAP kinase activation in tomato but not in Arabidopsis. The perception of highly conserved pathogen- or microbe-associated molecular patterns (PAMPs/MAMPs), such as flg22, triggers converging signaling pathways recruiting MAP kinase cascades and inducing transcriptional re-programming, yielding a generic antimicrobial response. This is RxLR effector protein SFI6 from Phytophthora infestans (strain T30-4) (Potato late blight agent).